The primary structure comprises 166 residues: FMN reductase (NADH) RutF (166 aa).

The protein belongs to the non-flavoprotein flavin reductase family. RutF subfamily.

The enzyme catalyses FMNH2 + NAD(+) = FMN + NADH + 2 H(+). In terms of biological role, catalyzes the reduction of FMN to FMNH2 which is used to reduce pyrimidine by RutA via the Rut pathway. In Cronobacter sakazakii (strain ATCC BAA-894) (Enterobacter sakazakii), this protein is FMN reductase (NADH) RutF.